A 224-amino-acid polypeptide reads, in one-letter code: PKHD-type hydroxylase SO_3913 (224 aa).

The Fe2OG dioxygenase domain occupies 78-176; it reads QFYPPLFNRY…RTSAFMWLQS (99 aa). Fe cation is bound by residues H96, D98, and H157. R167 contributes to the 2-oxoglutarate binding site.

It depends on Fe(2+) as a cofactor. Requires L-ascorbate as cofactor.

The polypeptide is PKHD-type hydroxylase SO_3913 (Shewanella oneidensis (strain ATCC 700550 / JCM 31522 / CIP 106686 / LMG 19005 / NCIMB 14063 / MR-1)).